The chain runs to 122 residues: Large ribosomal subunit protein eL34 (122 aa).

This sequence belongs to the eukaryotic ribosomal protein eL34 family.

The polypeptide is Large ribosomal subunit protein eL34 (rpl34) (Dictyostelium discoideum (Social amoeba)).